The following is a 155-amino-acid chain: Large ribosomal subunit protein uL11 (155 aa).

Belongs to the universal ribosomal protein uL11 family. Part of the ribosomal stalk of the 50S ribosomal subunit. Interacts with L10 and the large rRNA to form the base of the stalk. L10 forms an elongated spine to which L12 dimers bind in a sequential fashion forming a multimeric L10(L12)X complex.

Forms part of the ribosomal stalk which helps the ribosome interact with GTP-bound translation factors. The sequence is that of Large ribosomal subunit protein uL11 from Picrophilus torridus (strain ATCC 700027 / DSM 9790 / JCM 10055 / NBRC 100828 / KAW 2/3).